Reading from the N-terminus, the 738-residue chain is Protostadienol synthase A (738 aa).

A PFTB 1 repeat occupies 132–173; it reads KQEMCRYLLNVVNEDGGWGLFIQSPSTVFGTVMNYCMLRILG. The active-site Proton donor is the aspartate 463. PFTB repeat units follow at residues 490–531, 567–607, and 616–663; these read LQQA…YENV, VSRS…ACMG, and CQRA…AVIG.

It belongs to the terpene cyclase/mutase family.

It carries out the reaction (S)-2,3-epoxysqualene = (17Z)-protosta-17(20),24-dien-3beta-ol. Functionally, protostadienol synthase which cyclizes (3S)-oxidosqualene to (17Z)-protosta-17(20),24-dien-3-beta-ol (protostadienol), the biosynthetic precursor of helvolic acid, a secondary metabolite which promotes virulence. This chain is Protostadienol synthase A (pdsA), found in Neosartorya fischeri (strain ATCC 1020 / DSM 3700 / CBS 544.65 / FGSC A1164 / JCM 1740 / NRRL 181 / WB 181) (Aspergillus fischerianus).